A 238-amino-acid chain; its full sequence is Large ribosomal subunit protein uL1 (238 aa).

The protein belongs to the universal ribosomal protein uL1 family. Part of the 50S ribosomal subunit.

Binds directly to 23S rRNA. The L1 stalk is quite mobile in the ribosome, and is involved in E site tRNA release. Its function is as follows. Protein L1 is also a translational repressor protein, it controls the translation of the L11 operon by binding to its mRNA. The sequence is that of Large ribosomal subunit protein uL1 from Beutenbergia cavernae (strain ATCC BAA-8 / DSM 12333 / CCUG 43141 / JCM 11478 / NBRC 16432 / NCIMB 13614 / HKI 0122).